Here is a 1118-residue protein sequence, read N- to C-terminus: Cytospin-A (1118 aa).

Disordered regions lie at residues 1-157 (MKKS…DGQI) and 198-221 (GGKE…PHVS). Polar residues-rich tracts occupy residues 57 to 102 (NPTS…TKET) and 112 to 123 (SRASANKKQSAA). Residues 144 to 153 (SESRMSKSKS) are compositionally biased toward basic and acidic residues. The segment covering 204-215 (EGPEEEEEEEEE) has biased composition (acidic residues). Residues 225–264 (AADVESTLILLQEQNQAIREELNLLKSENRMLKDRLNALG) adopt a coiled-coil conformation. The tract at residues 289-379 (AGSGQSDGGG…RRGSSGNASE (91 aa)) is disordered. Residues 343–363 (SSDDALDAPSGASSSSESECA) show a composition bias toward low complexity. Coiled coils occupy residues 384–438 (CLTE…MDSL) and 475–796 (GRYM…RGRV). Disordered stretches follow at residues 771–790 (QEKN…RKQD), 837–876 (FDSA…PPAA), and 920–1001 (SAAS…ERKD). Polar residues predominate over residues 838-855 (DSASQGPPSNGASVTPTV). The span at 861–872 (PRTPLSPSPMKT) shows a compositional bias: pro residues. Positions 930–945 (QRVSNMDSTKTISVSR) are enriched in polar residues. Over residues 946–956 (RSSEEMKRDMS) the composition is skewed to basic and acidic residues. Positions 961-986 (ASSTSLMAMSAASAPLSLSSSSPTAS) are enriched in low complexity. The region spanning 1012–1117 (GSKRNALLKW…YVTAIYKYFE (106 aa)) is the Calponin-homology (CH) domain.

This sequence belongs to the cytospin-A family. May interact with both microtubules and actin cytoskeleton.

Its subcellular location is the cytoplasm. It localises to the cytoskeleton. It is found in the spindle. The protein resides in the cell junction. The protein localises to the gap junction. Functionally, involved in cytokinesis and spindle organization. May play a role in actin cytoskeleton organization and microtubule stabilization and hence required for proper cell adhesion and migration. This is Cytospin-A (specc1l) from Takifugu rubripes (Japanese pufferfish).